An 806-amino-acid polypeptide reads, in one-letter code: Disintegrin and metalloproteinase domain-containing protein 1b (806 aa).

The signal sequence occupies residues 1–33 (MERLKLGKIPEHWCIRLVAMLLLAIIFLPSTFC). Residues 169-188 (CSVTPKDSPGDTSHPPRSRK) are disordered. Residues 203–397 (KYVEMFVVVN…HRGVCLLDEP (195 aa)) form the Peptidase M12B domain. N-linked (GlcNAc...) asparagine glycosylation occurs at N224. Cystine bridges form between C313–C392, C353–C376, C355–C361, C462–C482, C635–C647, C641–C653, and C655–C664. H338 contributes to the Zn(2+) binding site. The active site involves E339. Zn(2+)-binding residues include H342 and H348. 2 N-linked (GlcNAc...) asparagine glycosylation sites follow: N375 and N476. Residues 406–490 (AANCGNGVVE…ACPSDRKAQD (85 aa)) enclose the Disintegrin domain. In terms of domain architecture, EGF-like spans 631–665 (FSFPCSPSKQCNKHGVCNDLGNCHCSFGFAPPDCK). Residues 668 to 694 (GTGGSVDSGPAVNLSNDSSPGPNSTQS) form a disordered region. N-linked (GlcNAc...) asparagine glycosylation is found at N680, N683, and N690. A compositionally biased stretch (polar residues) spans 680 to 694 (NLSNDSSPGPNSTQS). A helical membrane pass occupies residues 705–725 (LIVLAVILVLMILLIIICIIS). Over 726–806 (AYTKSETASE…KDEDEEEGEE (81 aa)) the chain is Cytoplasmic. The disordered stretch occupies residues 735–806 (EAGPSELEEL…KDEDEEEGEE (72 aa)). A compositionally biased stretch (acidic residues) spans 740–806 (ELEELPEGEK…KDEDEEEGEE (67 aa)).

Heterodimer with ADAM2/fertilin subunit beta. Testis.

The protein localises to the membrane. May play a role in spermatogenesis and sperm maturation. The polypeptide is Disintegrin and metalloproteinase domain-containing protein 1b (Adam1b) (Mus musculus (Mouse)).